A 482-amino-acid chain; its full sequence is Putative dipeptidase NECHADRAFT_87110 (482 aa).

Over residues 1–21 the composition is skewed to polar residues; that stretch reads MADTQTPNLQNTAEGDANTSA. A disordered region spans residues 1-24; sequence MADTQTPNLQNTAEGDANTSAENE. N-linked (GlcNAc...) asparagine glycosylation occurs at N18. Residues 41-61 form a helical membrane-spanning segment; sequence WLRYPFLVAGIALFLGPFSFF. Zn(2+) is bound by residues H90, D92, and E201. Residues C141 and C230 are joined by a disulfide bond. H228 serves as a coordination point for substrate. Zn(2+) is bound by residues H272 and H293. Residues R304 and D364 each coordinate substrate.

This sequence belongs to the metallo-dependent hydrolases superfamily. Peptidase M19 family. It depends on Zn(2+) as a cofactor.

It is found in the membrane. The enzyme catalyses an L-aminoacyl-L-amino acid + H2O = 2 an L-alpha-amino acid. In terms of biological role, hydrolyzes a wide range of dipeptides. This chain is Putative dipeptidase NECHADRAFT_87110, found in Fusarium vanettenii (strain ATCC MYA-4622 / CBS 123669 / FGSC 9596 / NRRL 45880 / 77-13-4) (Fusarium solani subsp. pisi).